Reading from the N-terminus, the 737-residue chain is Polyribonucleotide nucleotidyltransferase (737 aa).

Positions 489 and 495 each coordinate Mg(2+). In terms of domain architecture, KH spans proline 556–isoleucine 615. One can recognise an S1 motif domain in the interval aspartate 625–lysine 693. Residues serine 691–glutamate 737 are disordered. Basic and acidic residues-rich tracts occupy residues proline 700 to tyrosine 715 and proline 725 to glutamate 737.

It belongs to the polyribonucleotide nucleotidyltransferase family. The cofactor is Mg(2+).

It is found in the cytoplasm. It catalyses the reaction RNA(n+1) + phosphate = RNA(n) + a ribonucleoside 5'-diphosphate. In terms of biological role, involved in mRNA degradation. Catalyzes the phosphorolysis of single-stranded polyribonucleotides processively in the 3'- to 5'-direction. The protein is Polyribonucleotide nucleotidyltransferase of Streptococcus pneumoniae (strain Hungary19A-6).